Consider the following 437-residue polypeptide: MLQDPDSDQPLNSLDVKPLRKPRIPMETFRKVGIPIIIALLSLASIIIVVVLIKVILDKYYFLCGQPLHFIPRKQLCDGELDCPLGEDEEHCVKSFPEGPAVAVRLSKDRSTLQVLDSATGNWFSACFDNFTEALAETACRQMGYSSKPTFRAVEIGPDQDLDVVEITENSQELRMRNSSGPCLSGSLVSLHCLACGKSLKTPRVVGVEEASVDSWPWQVSIQYDKQHVCGGSILDPHWVLTAAHCFRKHTDVFNWKVRAGSDKLGSFPSLAVAKIIIIEFNPMYPKDNDIALMKLQFPLTFSGTVRPICLPFFDEELTPATPLWIIGWGFTKQNGGKMSDILLQASVQVIDSTRCNADDAYQGEVTEKMMCAGIPEGGVDTCQGDSGGPLMYQSDQWHVVGIVSWGYGCGGPSTPGVYTKVSAYLNWIYNVWKAEL.

Over 1–32 the chain is Cytoplasmic; sequence MLQDPDSDQPLNSLDVKPLRKPRIPMETFRKV. The helical; Signal-anchor for type II membrane protein transmembrane segment at 33–53 threads the bilayer; that stretch reads GIPIIIALLSLASIIIVVVLI. Residues 54–437 are Extracellular-facing; it reads KVILDKYYFL…WIYNVWKAEL (384 aa). The LDL-receptor class A domain occupies 61 to 93; that stretch reads YFLCGQPLHFIPRKQLCDGELDCPLGEDEEHCV. Disulfide bonds link cysteine 64/cysteine 83, cysteine 77/cysteine 92, cysteine 127/cysteine 183, cysteine 140/cysteine 193, cysteine 196/cysteine 310, cysteine 230/cysteine 246, cysteine 356/cysteine 372, and cysteine 383/cysteine 410. Positions 94-204 constitute an SRCR domain; the sequence is KSFPEGPAVA…ACGKSLKTPR (111 aa). 2 N-linked (GlcNAc...) asparagine glycosylation sites follow: asparagine 130 and asparagine 178. The 230-residue stretch at 205–434 folds into the Peptidase S1 domain; that stretch reads VVGVEEASVD…YLNWIYNVWK (230 aa). Residues histidine 245 and aspartate 290 each act as charge relay system in the active site. Serine 387 (charge relay system) is an active-site residue.

This sequence belongs to the peptidase S1 family. In terms of processing, proteolytically processed; probably by an autocatalytic mechanism. In terms of tissue distribution, high levels in pancreatic, gastric, colorectal and ampullary cancer. Very weak expression in normal gastrointestinal and urogenital tract. Coexpressed with ACE2 within mature enterocytes.

The protein resides in the cell membrane. It localises to the secreted. Functionally, plasma membrane-anchored serine protease that directly induces processing of pro-uPA/PLAU into the active form through proteolytic activity. Seems to be capable of activating ENaC. In terms of biological role, (Microbial infection) In gut epithelial cells, facilitates human coronavirus SARS-CoV-2 infection through, at least, the cleavage of coronavirus spike glycoproteins which activates the glycoprotein for host cell entry. This chain is Transmembrane protease serine 4, found in Homo sapiens (Human).